The primary structure comprises 461 residues: MKKIAVIGTGYVGLVSGTCFAEIGNKVVCCDIDESKIRSLKNGVIPIYEPGLADLVEKNVLDQRLTFTNDIPSAIRASDIIYIAVGTPMSKTGEADLTYVKAAAKTIGEHLNGYKVIVNKSTVPVGTGKLVQSIVQKASKGRYSFDVVSNPEFLREGSAIHDTMNMERAVIGSTSHKAAAIIEELHQPFHAPVIKTNLESAEMIKYAANAFLATKISFINDIANICERVGADVSKVADGVGLDSRIGRKFLKAGIGFGGSCFPKDTTALLQIAKSAGYPFKLIEAVIETNEKQRVHIVDKLLTVMGSVKGRTISVLGLAFKPNTNDVRSAPALDIIPMLQQLGAHVKAYDPIAIPEASAILGEQVEYYTDVYAAMEDTDACLILTDWPEVKEMELVKVKTLLKQPVIIDGRNLFSLEEMQAAGYIYHSIGRPAVRGTEPSDKYFPGLPLEELAKDLGSVNL.

NAD(+) is bound by residues 3–20 (KIAV…GTCF), V12, D31, K36, T122, and E156. Substrate is bound by residues 152 to 156 (EFLRE), K205, N209, 250 to 254 (FLKAG), and G258. C261 acts as the Nucleophile in catalysis. K264 serves as a coordination point for NAD(+). A substrate-binding site is contributed by K321. Position 328 (R328) interacts with NAD(+).

It belongs to the UDP-glucose/GDP-mannose dehydrogenase family. Phosphorylated by YwqD and dephosphorylated by YwqE in vitro.

The protein localises to the cytoplasm. The catalysed reaction is UDP-alpha-D-glucose + 2 NAD(+) + H2O = UDP-alpha-D-glucuronate + 2 NADH + 3 H(+). Its pathway is nucleotide-sugar biosynthesis; UDP-alpha-D-glucuronate biosynthesis; UDP-alpha-D-glucuronate from UDP-alpha-D-glucose: step 1/1. Its activity is regulated as follows. Activated by phosphorylation; inhibited by dephosphorylation. Catalyzes the conversion of UDP-glucose into UDP-glucuronate, one of the precursors of teichuronic acid. This Bacillus subtilis (strain 168) protein is UDP-glucose 6-dehydrogenase TuaD (tuaD).